Reading from the N-terminus, the 287-residue chain is Maleylpyruvate hydrolase (287 aa).

Residues Glu143, Glu145, and Asp174 each contribute to the a divalent metal cation site.

It belongs to the FAH family. As to quaternary structure, homodimer.

The catalysed reaction is 3-maleylpyruvate + H2O = maleate + pyruvate + H(+). Activated by Mn(2+). Inhibited by Ni(2+), Cd(2+), Co(2+) or Cu(2+). Involved in the degradation of gentisate. Catalyzes the hydrolysis of 3-maleylpyruvate, the ring-cleavage product of gentisate. The sequence is that of Maleylpyruvate hydrolase from Aquipseudomonas alcaligenes (Pseudomonas alcaligenes).